The chain runs to 217 residues: ATP phosphoribosyltransferase (217 aa).

Belongs to the ATP phosphoribosyltransferase family. Short subfamily. As to quaternary structure, heteromultimer composed of HisG and HisZ subunits.

It localises to the cytoplasm. The enzyme catalyses 1-(5-phospho-beta-D-ribosyl)-ATP + diphosphate = 5-phospho-alpha-D-ribose 1-diphosphate + ATP. It functions in the pathway amino-acid biosynthesis; L-histidine biosynthesis; L-histidine from 5-phospho-alpha-D-ribose 1-diphosphate: step 1/9. Catalyzes the condensation of ATP and 5-phosphoribose 1-diphosphate to form N'-(5'-phosphoribosyl)-ATP (PR-ATP). Has a crucial role in the pathway because the rate of histidine biosynthesis seems to be controlled primarily by regulation of HisG enzymatic activity. The chain is ATP phosphoribosyltransferase from Burkholderia multivorans (strain ATCC 17616 / 249).